A 437-amino-acid polypeptide reads, in one-letter code: MLDKNKQIWFIGIKGTGMASLALLLHDLGYNVAGSDIEKYTFTEVPLEKVGIDIKSFNPDNIKSNEEQVIVKGNAFKEDNPEVKACLDKGVKWQSYPDTVEEIVQMHTSIGISGTHGKTSTTSLLAHVLGEVAPTSYLIGDGRGKGVDDSRFFVYEADEYRRHFLAYHPDYQIMTNIDFDHPDYFKDQDDYTSAFQSAADQTKKALFVWGDDKRLQSLKTDIPKYTYGFKDTDDFQAVDIKKTTTGSSFNVLAHGKDLGRFEIHLFGDHSILNATAVIAVAYTEKVPMDAIREGLLTFKGAKRRFSEKDFGDIAVIDDYAHHPTEMRATIQAARQKFPDKKLVVVFQPHTFSRTKKYQKDFEEILRDVDKAYITPIYASAREANGDITSEDLVKNIPGSEVIDLDNIADLTKNKNSVIVFMGAGDIPKYEDAFEKLL.

An ATP-binding site is contributed by 114 to 120 (GTHGKTS).

The protein belongs to the MurCDEF family.

Its subcellular location is the cytoplasm. It catalyses the reaction UDP-N-acetyl-alpha-D-muramate + L-alanine + ATP = UDP-N-acetyl-alpha-D-muramoyl-L-alanine + ADP + phosphate + H(+). The protein operates within cell wall biogenesis; peptidoglycan biosynthesis. Functionally, cell wall formation. This is UDP-N-acetylmuramate--L-alanine ligase from Lactobacillus acidophilus (strain ATCC 700396 / NCK56 / N2 / NCFM).